Consider the following 59-residue polypeptide: MPVPKRRMSRSNTRSRRAQWKAALPTLVRCNNPACRQPKLPHVVCPNCGTYDRRPVLSS.

A compositionally biased stretch (basic residues) spans 1–19; that stretch reads MPVPKRRMSRSNTRSRRAQ. The disordered stretch occupies residues 1-20; sequence MPVPKRRMSRSNTRSRRAQW.

It belongs to the bacterial ribosomal protein bL32 family.

This is Large ribosomal subunit protein bL32 from Acidothermus cellulolyticus (strain ATCC 43068 / DSM 8971 / 11B).